A 440-amino-acid polypeptide reads, in one-letter code: Proline--tRNA ligase (440 aa).

The protein belongs to the class-II aminoacyl-tRNA synthetase family. ProS type 2 subfamily. In terms of assembly, homodimer.

It is found in the cytoplasm. The enzyme catalyses tRNA(Pro) + L-proline + ATP = L-prolyl-tRNA(Pro) + AMP + diphosphate. Catalyzes the attachment of proline to tRNA(Pro) in a two-step reaction: proline is first activated by ATP to form Pro-AMP and then transferred to the acceptor end of tRNA(Pro). The protein is Proline--tRNA ligase of Agrobacterium fabrum (strain C58 / ATCC 33970) (Agrobacterium tumefaciens (strain C58)).